The primary structure comprises 219 residues: Triosephosphate isomerase (219 aa).

Asn-6–Lys-8 contributes to the substrate binding site. The active-site Electrophile is His-90. Catalysis depends on Glu-138, which acts as the Proton acceptor. Substrate is bound by residues Ile-143, Gly-178, and Ala-199 to Ser-200.

This sequence belongs to the triosephosphate isomerase family. Homotetramer; dimer of dimers.

The protein localises to the cytoplasm. It carries out the reaction D-glyceraldehyde 3-phosphate = dihydroxyacetone phosphate. It participates in carbohydrate biosynthesis; gluconeogenesis. Its pathway is carbohydrate degradation; glycolysis; D-glyceraldehyde 3-phosphate from glycerone phosphate: step 1/1. In terms of biological role, involved in the gluconeogenesis. Catalyzes stereospecifically the conversion of dihydroxyacetone phosphate (DHAP) to D-glyceraldehyde-3-phosphate (G3P). In Methanocaldococcus jannaschii (strain ATCC 43067 / DSM 2661 / JAL-1 / JCM 10045 / NBRC 100440) (Methanococcus jannaschii), this protein is Triosephosphate isomerase.